A 156-amino-acid chain; its full sequence is Ribosomal RNA large subunit methyltransferase H (156 aa).

Residues Leu-73, Gly-104, and Leu-123–Leu-128 each bind S-adenosyl-L-methionine.

It belongs to the RNA methyltransferase RlmH family. In terms of assembly, homodimer.

The protein resides in the cytoplasm. The enzyme catalyses pseudouridine(1915) in 23S rRNA + S-adenosyl-L-methionine = N(3)-methylpseudouridine(1915) in 23S rRNA + S-adenosyl-L-homocysteine + H(+). Specifically methylates the pseudouridine at position 1915 (m3Psi1915) in 23S rRNA. In Shewanella sediminis (strain HAW-EB3), this protein is Ribosomal RNA large subunit methyltransferase H.